The chain runs to 304 residues: Aspartate carbamoyltransferase catalytic subunit (304 aa).

2 residues coordinate carbamoyl phosphate: arginine 53 and threonine 54. Lysine 82 contacts L-aspartate. 3 residues coordinate carbamoyl phosphate: arginine 103, histidine 131, and glutamine 134. Arginine 163 and arginine 224 together coordinate L-aspartate. Positions 263 and 264 each coordinate carbamoyl phosphate.

It belongs to the aspartate/ornithine carbamoyltransferase superfamily. ATCase family. In terms of assembly, heterooligomer of catalytic and regulatory chains.

It carries out the reaction carbamoyl phosphate + L-aspartate = N-carbamoyl-L-aspartate + phosphate + H(+). It participates in pyrimidine metabolism; UMP biosynthesis via de novo pathway; (S)-dihydroorotate from bicarbonate: step 2/3. Functionally, catalyzes the condensation of carbamoyl phosphate and aspartate to form carbamoyl aspartate and inorganic phosphate, the committed step in the de novo pyrimidine nucleotide biosynthesis pathway. This is Aspartate carbamoyltransferase catalytic subunit from Haloquadratum walsbyi (strain DSM 16790 / HBSQ001).